Reading from the N-terminus, the 87-residue chain is DNA-directed RNA polymerase subunit omega (87 aa).

It belongs to the RNA polymerase subunit omega family. As to quaternary structure, the RNAP catalytic core consists of 2 alpha, 1 beta, 1 beta' and 1 omega subunit. When a sigma factor is associated with the core the holoenzyme is formed, which can initiate transcription.

The enzyme catalyses RNA(n) + a ribonucleoside 5'-triphosphate = RNA(n+1) + diphosphate. Functionally, promotes RNA polymerase assembly. Latches the N- and C-terminal regions of the beta' subunit thereby facilitating its interaction with the beta and alpha subunits. In Pseudomonas syringae pv. syringae (strain B728a), this protein is DNA-directed RNA polymerase subunit omega.